The chain runs to 889 residues: Alanine--tRNA ligase (889 aa).

Positions 566, 570, 683, and 687 each coordinate Zn(2+).

Belongs to the class-II aminoacyl-tRNA synthetase family. Requires Zn(2+) as cofactor.

The protein localises to the cytoplasm. The enzyme catalyses tRNA(Ala) + L-alanine + ATP = L-alanyl-tRNA(Ala) + AMP + diphosphate. Functionally, catalyzes the attachment of alanine to tRNA(Ala) in a two-step reaction: alanine is first activated by ATP to form Ala-AMP and then transferred to the acceptor end of tRNA(Ala). Also edits incorrectly charged Ser-tRNA(Ala) and Gly-tRNA(Ala) via its editing domain. The protein is Alanine--tRNA ligase of Herpetosiphon aurantiacus (strain ATCC 23779 / DSM 785 / 114-95).